The sequence spans 141 residues: Putative antiporter subunit mnhB2 (141 aa).

4 helical membrane-spanning segments follow: residues 10 to 30 (TVTK…FFAG), 35 to 55 (GGGF…FLAF), 70 to 90 (KLMI…VFFG), and 116 to 136 (LFEL…MLAL).

This sequence belongs to the CPA3 antiporters (TC 2.A.63) subunit B family. In terms of assembly, may form a heterooligomeric complex that consists of seven subunits: mnhA2, mnhB2, mnhC2, mnhD2, mnhE2, mnhF2 and mnhG2.

It localises to the cell membrane. This chain is Putative antiporter subunit mnhB2 (mnhB2), found in Staphylococcus haemolyticus (strain JCSC1435).